We begin with the raw amino-acid sequence, 231 residues long: Phosphatidylserine decarboxylase proenzyme (231 aa).

Ser188 (schiff-base intermediate with substrate; via pyruvic acid) is an active-site residue. Ser188 is subject to Pyruvic acid (Ser); by autocatalysis.

Belongs to the phosphatidylserine decarboxylase family. PSD-A subfamily. As to quaternary structure, heterodimer of a large membrane-associated beta subunit and a small pyruvoyl-containing alpha subunit. The cofactor is pyruvate. In terms of processing, is synthesized initially as an inactive proenzyme. Formation of the active enzyme involves a self-maturation process in which the active site pyruvoyl group is generated from an internal serine residue via an autocatalytic post-translational modification. Two non-identical subunits are generated from the proenzyme in this reaction, and the pyruvate is formed at the N-terminus of the alpha chain, which is derived from the carboxyl end of the proenzyme. The post-translation cleavage follows an unusual pathway, termed non-hydrolytic serinolysis, in which the side chain hydroxyl group of the serine supplies its oxygen atom to form the C-terminus of the beta chain, while the remainder of the serine residue undergoes an oxidative deamination to produce ammonia and the pyruvoyl prosthetic group on the alpha chain.

Its subcellular location is the cell membrane. The enzyme catalyses a 1,2-diacyl-sn-glycero-3-phospho-L-serine + H(+) = a 1,2-diacyl-sn-glycero-3-phosphoethanolamine + CO2. The protein operates within phospholipid metabolism; phosphatidylethanolamine biosynthesis; phosphatidylethanolamine from CDP-diacylglycerol: step 2/2. Catalyzes the formation of phosphatidylethanolamine (PtdEtn) from phosphatidylserine (PtdSer). In Rickettsia africae (strain ESF-5), this protein is Phosphatidylserine decarboxylase proenzyme.